Consider the following 251-residue polypeptide: Pyrroloquinoline-quinone synthase (251 aa).

The protein belongs to the PqqC family.

It catalyses the reaction 6-(2-amino-2-carboxyethyl)-7,8-dioxo-1,2,3,4,7,8-hexahydroquinoline-2,4-dicarboxylate + 3 O2 = pyrroloquinoline quinone + 2 H2O2 + 2 H2O + H(+). It participates in cofactor biosynthesis; pyrroloquinoline quinone biosynthesis. Functionally, ring cyclization and eight-electron oxidation of 3a-(2-amino-2-carboxyethyl)-4,5-dioxo-4,5,6,7,8,9-hexahydroquinoline-7,9-dicarboxylic-acid to PQQ. This Pseudomonas putida (strain ATCC 700007 / DSM 6899 / JCM 31910 / BCRC 17059 / LMG 24140 / F1) protein is Pyrroloquinoline-quinone synthase.